The following is a 180-amino-acid chain: Amnesiac neuropeptides (180 aa).

The first 32 residues, 1–32, serve as a signal peptide directing secretion; the sequence is MRSFCCCFYPAAVALHCVLLFYTFFLLFRASA. Propeptides lie at residues 33-35 and 152-180; these read LRR and GRRSVPRGQPKFSRENPRALSPSLLGEMR. Positions 155 to 180 are disordered; sequence SVPRGQPKFSRENPRALSPSLLGEMR.

As to expression, enriched expression in the embryonic and larval nervous systems. Strongly expressed in two large neurons that project over all the lobes of the mushroom bodies.

The protein localises to the secreted. In terms of biological role, required for associative learning and memory in adults. Expression pattern suggests a modulatory role in memory formation. Controls neurotransmitter-mediated signaling pathways associated with the structure of the larval peripheral nerve. The chain is Amnesiac neuropeptides (amn) from Drosophila melanogaster (Fruit fly).